Consider the following 397-residue polypeptide: Flavohemoprotein (397 aa).

Positions 4-140 (SFSPHTITLI…IANLLKDREA (137 aa)) constitute a Globin domain. Residue H87 participates in heme b binding. Active-site charge relay system residues include Y97 and E139. A reductase region spans residues 151 to 397 (GGWIHWRRFV…FGPMDEEMAA (247 aa)). One can recognise an FAD-binding FR-type domain in the interval 154-258 (IHWRRFVISK…TPPVGDFFLP (105 aa)). Residues Y192 and 207–210 (RNYS) contribute to the FAD site. 271 to 276 (GVGLTP) lines the NADP(+) pocket. An FAD-binding site is contributed by 387–390 (FFGP).

It belongs to the globin family. Two-domain flavohemoproteins subfamily. The protein in the C-terminal section; belongs to the flavoprotein pyridine nucleotide cytochrome reductase family. The cofactor is heme b. FAD serves as cofactor.

The enzyme catalyses 2 nitric oxide + NADPH + 2 O2 = 2 nitrate + NADP(+) + H(+). It catalyses the reaction 2 nitric oxide + NADH + 2 O2 = 2 nitrate + NAD(+) + H(+). Is involved in NO detoxification in an aerobic process, termed nitric oxide dioxygenase (NOD) reaction that utilizes O(2) and NAD(P)H to convert NO to nitrate, which protects the bacterium from various noxious nitrogen compounds. Therefore, plays a central role in the inducible response to nitrosative stress. The protein is Flavohemoprotein of Xylella fastidiosa (strain 9a5c).